The following is a 205-amino-acid chain: Large ribosomal subunit protein uL4 (205 aa).

The tract at residues 45 to 97 (RQGTSAVKNRSAVRGGGKKPWRQKGTGRARQGSIRAPQWRGGGTVFGPTPRSY) is disordered. A compositionally biased stretch (basic residues) spans 60–71 (GGKKPWRQKGTG).

It belongs to the universal ribosomal protein uL4 family. In terms of assembly, part of the 50S ribosomal subunit.

One of the primary rRNA binding proteins, this protein initially binds near the 5'-end of the 23S rRNA. It is important during the early stages of 50S assembly. It makes multiple contacts with different domains of the 23S rRNA in the assembled 50S subunit and ribosome. In terms of biological role, forms part of the polypeptide exit tunnel. This is Large ribosomal subunit protein uL4 from Lactobacillus gasseri (strain ATCC 33323 / DSM 20243 / BCRC 14619 / CIP 102991 / JCM 1131 / KCTC 3163 / NCIMB 11718 / NCTC 13722 / AM63).